Here is a 331-residue protein sequence, read N- to C-terminus: Ketol-acid reductoisomerase (NADP(+)) (331 aa).

The 181-residue stretch at 2–182 (ARLYYDADAN…GGTRAGILET (181 aa)) folds into the KARI N-terminal Rossmann domain. Residues 25-28 (YGSQ), Ser-51, Ser-53, and 83-86 (DEVQ) contribute to the NADP(+) site. His-108 is an active-site residue. Gly-134 contributes to the NADP(+) binding site. Residues 183 to 328 (TFREETETDL…KDLRAMFSWT (146 aa)) enclose the KARI C-terminal knotted domain. Mg(2+) is bound by residues Asp-191, Glu-195, Glu-227, and Glu-231. A substrate-binding site is contributed by Ser-252.

This sequence belongs to the ketol-acid reductoisomerase family. Mg(2+) serves as cofactor.

It catalyses the reaction (2R)-2,3-dihydroxy-3-methylbutanoate + NADP(+) = (2S)-2-acetolactate + NADPH + H(+). It carries out the reaction (2R,3R)-2,3-dihydroxy-3-methylpentanoate + NADP(+) = (S)-2-ethyl-2-hydroxy-3-oxobutanoate + NADPH + H(+). It functions in the pathway amino-acid biosynthesis; L-isoleucine biosynthesis; L-isoleucine from 2-oxobutanoate: step 2/4. Its pathway is amino-acid biosynthesis; L-valine biosynthesis; L-valine from pyruvate: step 2/4. In terms of biological role, involved in the biosynthesis of branched-chain amino acids (BCAA). Catalyzes an alkyl-migration followed by a ketol-acid reduction of (S)-2-acetolactate (S2AL) to yield (R)-2,3-dihydroxy-isovalerate. In the isomerase reaction, S2AL is rearranged via a Mg-dependent methyl migration to produce 3-hydroxy-3-methyl-2-ketobutyrate (HMKB). In the reductase reaction, this 2-ketoacid undergoes a metal-dependent reduction by NADPH to yield (R)-2,3-dihydroxy-isovalerate. This Acaryochloris marina (strain MBIC 11017) protein is Ketol-acid reductoisomerase (NADP(+)).